We begin with the raw amino-acid sequence, 169 residues long: tRNA (cytidine(56)-2'-O)-methyltransferase (169 aa).

S-adenosyl-L-methionine-binding positions include L77, 103 to 107 (GSEKV), and 121 to 128 (IGNQPHSE).

It belongs to the aTrm56 family. Homodimer.

The protein resides in the cytoplasm. The catalysed reaction is cytidine(56) in tRNA + S-adenosyl-L-methionine = 2'-O-methylcytidine(56) in tRNA + S-adenosyl-L-homocysteine + H(+). Specifically catalyzes the AdoMet-dependent 2'-O-ribose methylation of cytidine at position 56 in tRNAs. The polypeptide is tRNA (cytidine(56)-2'-O)-methyltransferase (Sulfurisphaera tokodaii (strain DSM 16993 / JCM 10545 / NBRC 100140 / 7) (Sulfolobus tokodaii)).